The primary structure comprises 165 residues: Transcription factor zip-10 (165 aa).

Over residues 53–71 (ASLGTSTTSSSRCSSTESS) the composition is skewed to low complexity. Positions 53–99 (ASLGTSTTSSSRCSSTESSAAPGKIRRGRPQQEIADGQDAHSQKKRH) are disordered. Positions 104-150 (ARQYRAQMRQKVENVKSLHDEKEQLELEVKALRQAVSGLQQENAQKD) form a coiled coil.

The protein resides in the nucleus. Functionally, transcription factor that regulates the expression of genes in response to changes in temperature. In particular, binds to the promoter region of genes such as asp-17 in response to severe cold to warm temperature transitions to promote gene expression. Promotes stress-induced death, particularly in older animals, following cold shock followed by warming and this may have evolved as a form of kin survival under thermal stress conditions, favoring the survival of younger animals. In Caenorhabditis elegans, this protein is Transcription factor zip-10.